Reading from the N-terminus, the 313-residue chain is Ribose-phosphate pyrophosphokinase (313 aa).

ATP is bound by residues 40 to 42 (DGE) and 98 to 99 (RQ). 2 residues coordinate Mg(2+): His132 and Asp172. Lys195 is a catalytic residue. D-ribose 5-phosphate contacts are provided by residues Arg197, Asp221, and 225 to 229 (DTAGT).

It belongs to the ribose-phosphate pyrophosphokinase family. Class I subfamily. As to quaternary structure, homohexamer. The cofactor is Mg(2+).

The protein localises to the cytoplasm. It carries out the reaction D-ribose 5-phosphate + ATP = 5-phospho-alpha-D-ribose 1-diphosphate + AMP + H(+). It participates in metabolic intermediate biosynthesis; 5-phospho-alpha-D-ribose 1-diphosphate biosynthesis; 5-phospho-alpha-D-ribose 1-diphosphate from D-ribose 5-phosphate (route I): step 1/1. Its function is as follows. Involved in the biosynthesis of the central metabolite phospho-alpha-D-ribosyl-1-pyrophosphate (PRPP) via the transfer of pyrophosphoryl group from ATP to 1-hydroxyl of ribose-5-phosphate (Rib-5-P). In Porphyromonas gingivalis (strain ATCC BAA-308 / W83), this protein is Ribose-phosphate pyrophosphokinase.